We begin with the raw amino-acid sequence, 107 residues long: Large ribosomal subunit protein uL24 (107 aa).

This sequence belongs to the universal ribosomal protein uL24 family. As to quaternary structure, part of the 50S ribosomal subunit.

Its function is as follows. One of two assembly initiator proteins, it binds directly to the 5'-end of the 23S rRNA, where it nucleates assembly of the 50S subunit. Functionally, one of the proteins that surrounds the polypeptide exit tunnel on the outside of the subunit. This Nitratidesulfovibrio vulgaris (strain DSM 19637 / Miyazaki F) (Desulfovibrio vulgaris) protein is Large ribosomal subunit protein uL24.